A 143-amino-acid chain; its full sequence is MAKKITGYIKLQVPAGKANPSPPIGPALGQRGVNIMDFCKAFNAQTGDFEVGTPLPTIITVYADRSFSFVTKTPPATYLIKKAINLKSGSKEPGKASAGKIKRSQLAQIAEVKMKDLNANDIESATRIIEGSARAMGLEVVEG.

It belongs to the universal ribosomal protein uL11 family. Part of the ribosomal stalk of the 50S ribosomal subunit. Interacts with L10 and the large rRNA to form the base of the stalk. L10 forms an elongated spine to which L12 dimers bind in a sequential fashion forming a multimeric L10(L12)X complex. In terms of processing, one or more lysine residues are methylated.

Forms part of the ribosomal stalk which helps the ribosome interact with GTP-bound translation factors. In Rhizorhabdus wittichii (strain DSM 6014 / CCUG 31198 / JCM 15750 / NBRC 105917 / EY 4224 / RW1) (Sphingomonas wittichii), this protein is Large ribosomal subunit protein uL11.